The sequence spans 385 residues: tRNA-specific 2-thiouridylase MnmA (385 aa).

ATP contacts are provided by residues 18–25 (AMSGGVDS) and L44. C112 functions as the Nucleophile in the catalytic mechanism. C112 and C209 are joined by a disulfide. Residue G136 participates in ATP binding. The interval 159–161 (RDQ) is interaction with tRNA. C209 acts as the Cysteine persulfide intermediate in catalysis.

This sequence belongs to the MnmA/TRMU family.

It localises to the cytoplasm. It catalyses the reaction S-sulfanyl-L-cysteinyl-[protein] + uridine(34) in tRNA + AH2 + ATP = 2-thiouridine(34) in tRNA + L-cysteinyl-[protein] + A + AMP + diphosphate + H(+). Functionally, catalyzes the 2-thiolation of uridine at the wobble position (U34) of tRNA, leading to the formation of s(2)U34. The protein is tRNA-specific 2-thiouridylase MnmA of Methylorubrum populi (strain ATCC BAA-705 / NCIMB 13946 / BJ001) (Methylobacterium populi).